A 289-amino-acid polypeptide reads, in one-letter code: Thiazole synthase (289 aa).

The Schiff-base intermediate with DXP role is filled by K132. 1-deoxy-D-xylulose 5-phosphate is bound by residues G193, A219–G220, and N241–T242.

This sequence belongs to the ThiG family. Homotetramer. Forms heterodimers with either ThiH or ThiS.

The protein resides in the cytoplasm. The catalysed reaction is [ThiS sulfur-carrier protein]-C-terminal-Gly-aminoethanethioate + 2-iminoacetate + 1-deoxy-D-xylulose 5-phosphate = [ThiS sulfur-carrier protein]-C-terminal Gly-Gly + 2-[(2R,5Z)-2-carboxy-4-methylthiazol-5(2H)-ylidene]ethyl phosphate + 2 H2O + H(+). It participates in cofactor biosynthesis; thiamine diphosphate biosynthesis. Catalyzes the rearrangement of 1-deoxy-D-xylulose 5-phosphate (DXP) to produce the thiazole phosphate moiety of thiamine. Sulfur is provided by the thiocarboxylate moiety of the carrier protein ThiS. In vitro, sulfur can be provided by H(2)S. The protein is Thiazole synthase of Rhodospirillum rubrum (strain ATCC 11170 / ATH 1.1.1 / DSM 467 / LMG 4362 / NCIMB 8255 / S1).